We begin with the raw amino-acid sequence, 131 residues long: Protein FAM107B (131 aa).

An N-acetylalanine modification is found at alanine 2. Disordered stretches follow at residues 39 to 78 and 100 to 131; these read MNQKRGLAPQNKPELQKVMEKRKRDQVIKQKEEEAQKKKS and KLQEEQENAPEFVKVKGNLRRTGQEVAQAQES. Lysine 50 bears the N6-acetyllysine mark. Basic and acidic residues predominate over residues 52-78; it reads ELQKVMEKRKRDQVIKQKEEEAQKKKS. The stretch at 61–112 forms a coiled coil; sequence KRDQVIKQKEEEAQKKKSDLEIELLKRQQKLEQLELEKQKLQEEQENAPEFV.

The protein belongs to the FAM107 family.

The polypeptide is Protein FAM107B (Homo sapiens (Human)).